We begin with the raw amino-acid sequence, 203 residues long: CS5 fimbrial subunit (203 aa).

The first 22 residues, 1 to 22 (MKKNLLITSVLAMATVSGSVLA), serve as a signal peptide directing secretion.

The protein resides in the fimbrium. In terms of biological role, major subunit of fimbriae. Fimbriae (also called pili), are polar filaments radiating from the surface of the bacterium to a length of 0.5-1.5 micrometers and numbering 100-300 per cell. They enable bacteria to colonize the epithelium of specific host organs. In Escherichia coli, this protein is CS5 fimbrial subunit.